The following is a 45-amino-acid chain: uncharacterized protein (45 aa).

A helical membrane pass occupies residues 10 to 27 (LLYFVLFVDIYGIFTNNI).

The protein resides in the membrane. This is an uncharacterized protein from Dictyostelium discoideum (Social amoeba).